The following is a 110-amino-acid chain: Large ribosomal subunit protein uL22 (110 aa).

The protein belongs to the universal ribosomal protein uL22 family. In terms of assembly, part of the 50S ribosomal subunit.

This protein binds specifically to 23S rRNA; its binding is stimulated by other ribosomal proteins, e.g. L4, L17, and L20. It is important during the early stages of 50S assembly. It makes multiple contacts with different domains of the 23S rRNA in the assembled 50S subunit and ribosome. Its function is as follows. The globular domain of the protein is located near the polypeptide exit tunnel on the outside of the subunit, while an extended beta-hairpin is found that lines the wall of the exit tunnel in the center of the 70S ribosome. This chain is Large ribosomal subunit protein uL22, found in Shewanella halifaxensis (strain HAW-EB4).